An 82-amino-acid chain; its full sequence is RNA-binding protein Hfq (82 aa).

Residues 11–71 enclose the Sm domain; that stretch reads DTFLNHVRKT…ISTIMPGAPI (61 aa).

This sequence belongs to the Hfq family. As to quaternary structure, homohexamer.

Functionally, RNA chaperone that binds small regulatory RNA (sRNAs) and mRNAs to facilitate mRNA translational regulation in response to envelope stress, environmental stress and changes in metabolite concentrations. Also binds with high specificity to tRNAs. The sequence is that of RNA-binding protein Hfq from Bradyrhizobium diazoefficiens (strain JCM 10833 / BCRC 13528 / IAM 13628 / NBRC 14792 / USDA 110).